A 344-amino-acid chain; its full sequence is MLKNAVLLACRAPSVHNSQPWRWVAESGSEHTTVHLFVNRHRTVPATDHSGRQAIISCGAVLDHLRIAMTAAHWQANITRFPQPNQPDQLATVEFSPIDHVTAGQRNRAQAILQRRTDRLPFDSPMYWHLFEPALRDAVDKDVAMLDVVSDDQRTRLVVASQLSEVLRRDDPYYHAELEWWTSPFVLAHGVPPDTLASDAERLRVDLGRDFPVRSYQNRRAELADDRSKVLVLSTPSDTRADALRCGEVLSTILLECTMAGMATCTLTHLIESSDSRDIVRGLTRQRGEPQALIRVGIAPPLAAVPAPTPRRPLDSVLQIRQTPEKGRNASDRNARETGWFSPP.

The interval 304–344 is disordered; that stretch reads AVPAPTPRRPLDSVLQIRQTPEKGRNASDRNARETGWFSPP. Residues 323 to 336 show a composition bias toward basic and acidic residues; sequence TPEKGRNASDRNAR.

This is an uncharacterized protein from Mycobacterium tuberculosis (strain CDC 1551 / Oshkosh).